We begin with the raw amino-acid sequence, 922 residues long: MEGPGQDTEDALRRSLDPEGYEDTKGSRTSLGTMSNPLVSDVDLEAAGSRQPTAHRDTYEGYVELHELVLDSRKDPCWMEAGRWLHLEESMEPGGAWGSHLPLLTYHSLLELHRAFAKGVVLLDVAANSLAAVAHVLLDQLIYEGQLKPQHRDDVLRALLLRHKHPSEAESVWTLPAAQLQCSDGEQKDADERALLRDQRAVEMRELHGAGQSPSRAQLGPQLHQQLPEDTEATLVLVACAAFLEQPLLALVRLGAPCPDAVLAVPLPVRFVLTVLGPDSPRLSYHEIRRAAATVMADRVFRRDAYLCGGRAELLGGLQGFLEASIVLPPQEVPSEQHLHALIPLQRHAVRRRYQHPDTVRSPGGPTAPKDTGDKGQAPQDDDPLLRTRRPFGGLVRDIRRRYPKYLSDIRDALNPQCLAAVIFIYFAALSPAITFGGLLGEKTRGMMGVSELLLSTSVQCLLFSLLSAQPLLVVGFSGPLLVFEEAFFRFCEDHGLEYIVGRVWIGFWLILLVLLVVACEGTVLVRYLSRYTQEIFSFLISLIFIYETFAKLVTIFEAHPLQQSYDTDVSTEPSVPKPNTALLSLVLMAGTFFLALFLRQFKNSVFLPGKVRRLIGDFGVPISIFVMALADFFIKDTYTQKLKVPRGLEVTNGTARGWFIHPMGSATPFPIWMMFASPVPALLVFILIFLETQITTLIVSKPERKLVKGSGFHLDLLLIVAMGGLAALFGMPWLSATTVRTITHANALTVVGKSAVPGERAHIVEVKEQRLSGLLVAVLIGVSILMEPILKYIPLAVLFGIFLYMGVTSLFGIQLFDRILLLLMPPKYHPKEPYVTRVKTWRITSSPLTQILVVALLWGVKVSPASLRCPFVLVLTVPLRRLLLPRIFSEIELKCLDTDDAVVTFEEAEGQDVYNEVQMPS.

Disordered regions lie at residues 1 to 36 and 355 to 389; these read MEGPGQDTEDALRRSLDPEGYEDTKGSRTSLGTMSN and QHPDTVRSPGGPTAPKDTGDKGQAPQDDDPLLRTR. Residues 1 to 416 lie on the Cytoplasmic side of the membrane; sequence MEGPGQDTED…LSDIRDALNP (416 aa). Residues 10 to 26 are compositionally biased toward basic and acidic residues; sequence DALRRSLDPEGYEDTKG. The segment covering 27–36 has biased composition (polar residues); it reads SRTSLGTMSN. A helical membrane pass occupies residues 417-440; sequence QCLAAVIFIYFAALSPAITFGGLL. The Extracellular portion of the chain corresponds to 441–448; the sequence is GEKTRGMM. Residues 449–469 form a helical membrane-spanning segment; that stretch reads GVSELLLSTSVQCLLFSLLSA. Residues 470 to 472 lie on the Cytoplasmic side of the membrane; that stretch reads QPL. Residues 473 to 489 traverse the membrane as a discontinuously helical segment; that stretch reads LVVGFSGPLLVFEEAFF. Over 490–498 the chain is Extracellular; sequence RFCEDHGLE. A helical transmembrane segment spans residues 499-519; it reads YIVGRVWIGFWLILLVLLVVA. Residues 520–531 lie on the Cytoplasmic side of the membrane; the sequence is CEGTVLVRYLSR. A helical transmembrane segment spans residues 532 to 554; it reads YTQEIFSFLISLIFIYETFAKLV. Over 555 to 581 the chain is Extracellular; it reads TIFEAHPLQQSYDTDVSTEPSVPKPNT. Residues 582 to 602 form a helical membrane-spanning segment; that stretch reads ALLSLVLMAGTFFLALFLRQF. Residues 603-613 are Cytoplasmic-facing; sequence KNSVFLPGKVR. The chain crosses the membrane as a helical span at residues 614–634; sequence RLIGDFGVPISIFVMALADFF. At 635–674 the chain is on the extracellular side; it reads IKDTYTQKLKVPRGLEVTNGTARGWFIHPMGSATPFPIWM. N653 carries N-linked (GlcNAc...) asparagine glycosylation. The chain crosses the membrane as a helical span at residues 675–695; it reads MFASPVPALLVFILIFLETQI. At 696–711 the chain is on the cytoplasmic side; the sequence is TTLIVSKPERKLVKGS. Residues 712-730 form a helical membrane-spanning segment; that stretch reads GFHLDLLLIVAMGGLAALF. The chain crosses the membrane as a discontinuously helical span at residues 731 to 748; the sequence is GMPWLSATTVRTITHANA. The Cytoplasmic segment spans residues 749–771; it reads LTVVGKSAVPGERAHIVEVKEQR. A run of 2 helical transmembrane segments spans residues 772 to 792 and 793 to 811; these read LSGLLVAVLIGVSILMEPILK and YIPLAVLFGIFLYMGVTSL. Residues 812–849 lie on the Cytoplasmic side of the membrane; that stretch reads FGIQLFDRILLLLMPPKYHPKEPYVTRVKTWRITSSPL. An intramembrane region (discontinuously helical) is located at residues 850–880; that stretch reads TQILVVALLWGVKVSPASLRCPFVLVLTVPL. The Cytoplasmic portion of the chain corresponds to 881-922; the sequence is RRLLLPRIFSEIELKCLDTDDAVVTFEEAEGQDVYNEVQMPS.

This sequence belongs to the anion exchanger (TC 2.A.31) family. A dimer in solution, it spans the membrane asymmetrically and appears to be tetrameric. As to expression, erythrocytes.

It localises to the cell membrane. The protein localises to the basolateral cell membrane. The catalysed reaction is hydrogencarbonate(in) + chloride(out) = hydrogencarbonate(out) + chloride(in). Functionally, functions both as a transporter that mediates electroneutral anion exchange across the cell membrane and as a structural protein. Major integral membrane glycoprotein of the erythrocyte membrane; required for normal flexibility and stability of the erythrocyte membrane and for normal erythrocyte shape via the interactions of its cytoplasmic domain with cytoskeletal proteins, glycolytic enzymes, and hemoglobin. Functions as a transporter that mediates the 1:1 exchange of inorganic anions across the erythrocyte membrane. Mediates chloride-bicarbonate exchange in the kidney, and is required for normal acidification of the urine. This Gallus gallus (Chicken) protein is Band 3 anion transport protein (SLC4A1).